The chain runs to 88 residues: Beta-insect excitatory toxin LqhIT1d (88 aa).

An N-terminal signal peptide occupies residues 1–18 (MKFFLLFLVVLPIMGVLG). One can recognise an LCN-type CS-alpha/beta domain in the interval 20–83 (KNGFAVDSNG…ISDTRKKLCD (64 aa)). 4 disulfide bridges follow: Cys-34–Cys-55, Cys-40–Cys-60, Cys-44–Cys-62, and Cys-56–Cys-82.

It belongs to the long (4 C-C) scorpion toxin superfamily. Sodium channel inhibitor family. Beta subfamily. Expressed by the venom gland.

It localises to the secreted. Excitatory insect toxins induce a spastic paralysis. They bind voltage-independently at site-4 of sodium channels (Nav) and shift the voltage of activation toward more negative potentials thereby affecting sodium channel activation and promoting spontaneous and repetitive firing. The polypeptide is Beta-insect excitatory toxin LqhIT1d (Leiurus hebraeus (Hebrew deathstalker scorpion)).